The following is a 546-amino-acid chain: Chaperonin GroEL (546 aa).

ATP is bound by residues 30 to 33, Lys-51, 87 to 91, Gly-415, 479 to 481, and Asp-495; these read TLGP, DGTTT, and NAA. Residues 526–546 form a disordered region; that stretch reads KKGDSAPAGGGMGDMGGMGMM. Over residues 533–546 the composition is skewed to gly residues; it reads AGGGMGDMGGMGMM.

Belongs to the chaperonin (HSP60) family. As to quaternary structure, forms a cylinder of 14 subunits composed of two heptameric rings stacked back-to-back. Interacts with the co-chaperonin GroES.

It localises to the cytoplasm. The catalysed reaction is ATP + H2O + a folded polypeptide = ADP + phosphate + an unfolded polypeptide.. Its function is as follows. Together with its co-chaperonin GroES, plays an essential role in assisting protein folding. The GroEL-GroES system forms a nano-cage that allows encapsulation of the non-native substrate proteins and provides a physical environment optimized to promote and accelerate protein folding. This is Chaperonin GroEL from Thioalkalivibrio sulfidiphilus (strain HL-EbGR7).